Consider the following 397-residue polypeptide: 1-deoxy-D-xylulose 5-phosphate reductoisomerase (397 aa).

The NADPH site is built by Ser-10, Gly-11, Ser-12, Ile-13, Ala-36, Arg-37, and Asn-124. Position 125 (Lys-125) interacts with 1-deoxy-D-xylulose 5-phosphate. Position 126 (Glu-126) interacts with NADPH. Position 150 (Asp-150) interacts with Mn(2+). 4 residues coordinate 1-deoxy-D-xylulose 5-phosphate: Ser-151, Glu-152, Ser-186, and His-209. Position 152 (Glu-152) interacts with Mn(2+). Gly-215 is an NADPH binding site. 4 residues coordinate 1-deoxy-D-xylulose 5-phosphate: Ser-222, Asn-227, Lys-228, and Glu-231. Glu-231 serves as a coordination point for Mn(2+).

The protein belongs to the DXR family. Mg(2+) is required as a cofactor. Requires Mn(2+) as cofactor.

The catalysed reaction is 2-C-methyl-D-erythritol 4-phosphate + NADP(+) = 1-deoxy-D-xylulose 5-phosphate + NADPH + H(+). Its pathway is isoprenoid biosynthesis; isopentenyl diphosphate biosynthesis via DXP pathway; isopentenyl diphosphate from 1-deoxy-D-xylulose 5-phosphate: step 1/6. In terms of biological role, catalyzes the NADPH-dependent rearrangement and reduction of 1-deoxy-D-xylulose-5-phosphate (DXP) to 2-C-methyl-D-erythritol 4-phosphate (MEP). The protein is 1-deoxy-D-xylulose 5-phosphate reductoisomerase of Aeromonas salmonicida (strain A449).